The following is a 684-amino-acid chain: UvrABC system protein B (684 aa).

Residues 30 to 188 form the Helicase ATP-binding domain; that stretch reads EGVQRGDRWQ…QELVSLHYVR (159 aa). 43–50 provides a ligand contact to ATP; sequence GVTGSGKT. The Beta-hairpin signature appears at 96–119; that stretch reads YYDFYQPEAYLPALDKYIAKDLRI. A Helicase C-terminal domain is found at 435–601; sequence QIDDLLGEIR…SIIKSVEQVL (167 aa). The region spanning 641–676 is the UVR domain; it reads YSMAESLRLEMQEAALKMEYEKAAYLRDEITKFEHR.

This sequence belongs to the UvrB family. As to quaternary structure, forms a heterotetramer with UvrA during the search for lesions. Interacts with UvrC in an incision complex.

The protein resides in the cytoplasm. Functionally, the UvrABC repair system catalyzes the recognition and processing of DNA lesions. A damage recognition complex composed of 2 UvrA and 2 UvrB subunits scans DNA for abnormalities. Upon binding of the UvrA(2)B(2) complex to a putative damaged site, the DNA wraps around one UvrB monomer. DNA wrap is dependent on ATP binding by UvrB and probably causes local melting of the DNA helix, facilitating insertion of UvrB beta-hairpin between the DNA strands. Then UvrB probes one DNA strand for the presence of a lesion. If a lesion is found the UvrA subunits dissociate and the UvrB-DNA preincision complex is formed. This complex is subsequently bound by UvrC and the second UvrB is released. If no lesion is found, the DNA wraps around the other UvrB subunit that will check the other stand for damage. The sequence is that of UvrABC system protein B from Chlorobium limicola (strain DSM 245 / NBRC 103803 / 6330).